Consider the following 373-residue polypeptide: Chaperone protein DnaJ (373 aa).

Residues 5–70 (DYYELLEVDR…EKRALYDQYG (66 aa)) enclose the J domain. The CR-type zinc finger occupies 134-211 (GTQKEVHYSF…CSGKGYRIEK (78 aa)). 8 residues coordinate Zn(2+): C147, C150, C163, C166, C185, C188, C199, and C202. CXXCXGXG motif repeat units follow at residues 147 to 154 (CSACKGTG), 163 to 170 (CPECHGRG), 185 to 192 (CPRCHGQG), and 199 to 206 (CEECSGKG).

Belongs to the DnaJ family. Homodimer. It depends on Zn(2+) as a cofactor.

The protein resides in the cytoplasm. Functionally, participates actively in the response to hyperosmotic and heat shock by preventing the aggregation of stress-denatured proteins and by disaggregating proteins, also in an autonomous, DnaK-independent fashion. Unfolded proteins bind initially to DnaJ; upon interaction with the DnaJ-bound protein, DnaK hydrolyzes its bound ATP, resulting in the formation of a stable complex. GrpE releases ADP from DnaK; ATP binding to DnaK triggers the release of the substrate protein, thus completing the reaction cycle. Several rounds of ATP-dependent interactions between DnaJ, DnaK and GrpE are required for fully efficient folding. Also involved, together with DnaK and GrpE, in the DNA replication of plasmids through activation of initiation proteins. In Nitratiruptor sp. (strain SB155-2), this protein is Chaperone protein DnaJ.